The primary structure comprises 1732 residues: Serine/threonine-protein kinase MRCK alpha (1732 aa).

Residues 77 to 343 (FEILKVIGRG…IEDFKKHPFF (267 aa)) form the Protein kinase domain. ATP-binding positions include 83-91 (IGRGAFGEV) and Lys-106. Asp-201 acts as the Proton acceptor in catalysis. Phosphoserine; by autocatalysis is present on residues Ser-222 and Ser-234. Phosphothreonine; by autocatalysis is present on Thr-240. The region spanning 344-414 (SGIDWDNIRN…TSSCVLSDRS (71 aa)) is the AGC-kinase C-terminal domain. 3 coiled-coil regions span residues 437–670 (NNLA…KQKQ), 713–820 (SEIK…WEAQ), and 880–943 (LELQ…SEKG). The segment at 973–1002 (CTPAGKGRRIADSAPLPVHTPTLRKKGCPA) is disordered. Residues 1012–1062 (THQFFVKSFTAPTKCHQCTSLMVGLIRQGCSCEVCGFSCHITCVNKAPTTC) form a Phorbol-ester/DAG-type zinc finger. Residues 1082-1201 (GTAYEGHVRI…WVGVLSELHK (120 aa)) enclose the PH domain. Phosphoserine is present on Ser-1127. One can recognise a CNH domain in the interval 1227 to 1499 (IKTTQAAAII…RPLNTEGSLN (273 aa)). Phosphoserine is present on Ser-1545. The CRIB domain occupies 1571–1584 (ISNPTNFNHIAHMG). The segment at 1592–1732 (LKDLPMNPRP…ESTDRGSWDP (141 aa)) is disordered. Residues 1604 to 1619 (SRTVFSGSVSIPSITK) show a composition bias toward polar residues. Phosphoserine occurs at positions 1611, 1613, 1629, 1651, 1664, 1669, 1693, 1719, and 1721. Over residues 1625–1640 (GRSMSASSGLSARSSA) the composition is skewed to low complexity. Positions 1665–1674 (PSEGSLSSGG) are enriched in low complexity.

It belongs to the protein kinase superfamily. AGC Ser/Thr protein kinase family. DMPK subfamily. Homodimer and homotetramer via the coiled coil regions. Interacts tightly with GTP-bound but not GDP-bound CDC42. Forms a tripartite complex with MYO18A and LURAP1 with the latter acting as an adapter connecting CDC42BPA and MYO18A. LURAP1 binding results in activation of CDC42BPA by abolition of its negative autoregulation. Interacts with LURAP1. Interacts (via AGC-kinase C-terminal domain) with FAM89B/LRAP25 (via LRR repeat). Forms a tripartite complex with FAM89B/LRAP25 and LIMK1. It depends on Mg(2+) as a cofactor. In terms of processing, proteolytically cleaved by caspases upon apoptosis induction. The cleavage at Asp-478 by CASP3 increases its kinase activity (in vitro). As to expression, highly expressed in the brain and lung and present in lower levels in all other tissues tested.

It is found in the cytoplasm. It localises to the cell projection. The protein localises to the lamellipodium. The enzyme catalyses L-seryl-[protein] + ATP = O-phospho-L-seryl-[protein] + ADP + H(+). The catalysed reaction is L-threonyl-[protein] + ATP = O-phospho-L-threonyl-[protein] + ADP + H(+). With respect to regulation, maintained in an inactive, closed conformation by an interaction between the kinase domain and the negative autoregulatory C-terminal coiled-coil region. Agonist binding to the phorbol ester binding site disrupts this, releasing the kinase domain to allow N-terminus-mediated dimerization and kinase activation by transautophosphorylation. Inhibited by chelerythrine chloride. Functionally, serine/threonine-protein kinase which is an important downstream effector of CDC42 and plays a role in the regulation of cytoskeleton reorganization and cell migration. Regulates actin cytoskeletal reorganization via phosphorylation of PPP1R12A and MYL9/MLC2. In concert with MYO18A and LURAP1, is involved in modulating lamellar actomyosin retrograde flow that is crucial to cell protrusion and migration. Phosphorylates: PPP1R12C, LIMK1 and LIMK2. May play a role in TFRC-mediated iron uptake. In concert with FAM89B/LRAP25 mediates the targeting of LIMK1 to the lamellipodium resulting in its activation and subsequent phosphorylation of CFL1 which is important for lamellipodial F-actin regulation. Triggers the formation of an extrusion apical actin ring required for epithelial extrusion of apoptotic cells. The polypeptide is Serine/threonine-protein kinase MRCK alpha (Rattus norvegicus (Rat)).